Reading from the N-terminus, the 213-residue chain is Urease accessory protein UreE (213 aa).

The disordered stretch occupies residues 170-213 (EHHGRSHSHSHSHSHDHDHDHDHDHDHDHQHGPSCSHGHGHGHR). Positions 182–200 (HSHDHDHDHDHDHDHDHQH) are enriched in basic and acidic residues.

The protein belongs to the UreE family.

It localises to the cytoplasm. In terms of biological role, involved in urease metallocenter assembly. Binds nickel. Probably functions as a nickel donor during metallocenter assembly. This Burkholderia thailandensis (strain ATCC 700388 / DSM 13276 / CCUG 48851 / CIP 106301 / E264) protein is Urease accessory protein UreE.